Reading from the N-terminus, the 157-residue chain is 2-C-methyl-D-erythritol 2,4-cyclodiphosphate synthase (157 aa).

Positions 8 and 10 each coordinate a divalent metal cation. Residues 8 to 10 and 34 to 35 contribute to the 4-CDP-2-C-methyl-D-erythritol 2-phosphate site; these read DVH and HS. H42 is a binding site for a divalent metal cation. 4-CDP-2-C-methyl-D-erythritol 2-phosphate-binding positions include 56-58, 61-65, 100-106, 132-135, F139, and R142; these read DIG, FPDTD, AQAPKMA, and TTTE.

This sequence belongs to the IspF family. As to quaternary structure, homotrimer. A divalent metal cation serves as cofactor.

The catalysed reaction is 4-CDP-2-C-methyl-D-erythritol 2-phosphate = 2-C-methyl-D-erythritol 2,4-cyclic diphosphate + CMP. It functions in the pathway isoprenoid biosynthesis; isopentenyl diphosphate biosynthesis via DXP pathway; isopentenyl diphosphate from 1-deoxy-D-xylulose 5-phosphate: step 4/6. Its function is as follows. Involved in the biosynthesis of isopentenyl diphosphate (IPP) and dimethylallyl diphosphate (DMAPP), two major building blocks of isoprenoid compounds. Catalyzes the conversion of 4-diphosphocytidyl-2-C-methyl-D-erythritol 2-phosphate (CDP-ME2P) to 2-C-methyl-D-erythritol 2,4-cyclodiphosphate (ME-CPP) with a corresponding release of cytidine 5-monophosphate (CMP). This Pseudomonas aeruginosa (strain UCBPP-PA14) protein is 2-C-methyl-D-erythritol 2,4-cyclodiphosphate synthase.